The chain runs to 398 residues: Probable RNA methyltransferase sce1580 (398 aa).

The segment at 1 to 24 (MRVPEIPEETASPLRAGDPPAQVA) is disordered. E140 serves as the catalytic Proton acceptor. Residues 146 to 378 (GPARTTLCVS…TLVRRPRGRD (233 aa)) enclose the Radical SAM core domain. C153 and C383 are joined by a disulfide. [4Fe-4S] cluster contacts are provided by C160, C164, and C167. S-adenosyl-L-methionine contacts are provided by residues 211–212 (GE), S243, 265–267 (SLN), and N340. C383 functions as the S-methylcysteine intermediate in the catalytic mechanism.

This sequence belongs to the radical SAM superfamily. RlmN family. Requires [4Fe-4S] cluster as cofactor.

It localises to the cytoplasm. In Sorangium cellulosum (strain So ce56) (Polyangium cellulosum (strain So ce56)), this protein is Probable RNA methyltransferase sce1580.